We begin with the raw amino-acid sequence, 383 residues long: tRNA-specific 2-thiouridylase MnmA (383 aa).

Residues 16-23 (AMSGGVDS) and Leu-42 contribute to the ATP site. The active-site Nucleophile is Cys-110. Cys-110 and Cys-209 form a disulfide bridge. Gly-134 lines the ATP pocket. Positions 159 to 161 (KDQ) are interaction with tRNA. Cys-209 (cysteine persulfide intermediate) is an active-site residue.

The protein belongs to the MnmA/TRMU family.

The protein localises to the cytoplasm. The enzyme catalyses S-sulfanyl-L-cysteinyl-[protein] + uridine(34) in tRNA + AH2 + ATP = 2-thiouridine(34) in tRNA + L-cysteinyl-[protein] + A + AMP + diphosphate + H(+). Its function is as follows. Catalyzes the 2-thiolation of uridine at the wobble position (U34) of tRNA, leading to the formation of s(2)U34. This Caulobacter vibrioides (strain ATCC 19089 / CIP 103742 / CB 15) (Caulobacter crescentus) protein is tRNA-specific 2-thiouridylase MnmA.